A 516-amino-acid chain; its full sequence is Threonine synthase 2, chloroplastic (516 aa).

The N-terminal 33 residues, 1–33 (MASFSLPHSATYFPSHSETSLKPHSAASFTVRC), are a transit peptide targeting the chloroplast. The segment covering 1 to 37 (MASFSLPHSATYFPSHSETSLKPHSAASFTVRCTSAS) has biased composition (polar residues). Residues 1–55 (MASFSLPHSATYFPSHSETSLKPHSAASFTVRCTSASPAVPPQTPQKPRRSPDEN) form a disordered region. S-adenosyl-L-methionine is bound by residues 133–135 (PYG), 156–158 (SAF), N163, L164, K172, and N178. The residue at position 194 (K194) is an N6-(pyridoxal phosphate)lysine. Residues 326 to 330 (GNLGN) and T464 each bind pyridoxal 5'-phosphate.

Belongs to the threonine synthase family. In terms of assembly, homodimer. Pyridoxal 5'-phosphate serves as cofactor.

It localises to the plastid. It is found in the chloroplast. The catalysed reaction is O-phospho-L-homoserine + H2O = L-threonine + phosphate. The protein operates within amino-acid biosynthesis; L-threonine biosynthesis; L-threonine from L-aspartate: step 5/5. With respect to regulation, allosterically activated by S-adenosyl-methionine (SAM). Its function is as follows. Catalyzes the gamma-elimination of phosphate from L-phosphohomoserine and the beta-addition of water to produce L-threonine. This is Threonine synthase 2, chloroplastic (TS2) from Arabidopsis thaliana (Mouse-ear cress).